The chain runs to 422 residues: Carboxypeptidase B2 (422 aa).

A signal peptide spans 1 to 21; sequence MKLHGLGILVAIILYEQHGFA. Residues 22 to 113 constitute a propeptide, activation peptide; it reads FQSGQVLSAL…QTFNDTVSPR (92 aa). 4 N-linked (GlcNAc...) asparagine glycosylation sites follow: Asn43, Asn72, Asn84, and Asn107. The Peptidase M14 domain occupies 121 to 418; that stretch reads QYHSLNEIYS…AAISKIVWHV (298 aa). A disulfide bond links Cys177 and Cys190. Zn(2+) is bound by residues His180 and Glu183. Residues 180–183 and Arg238 contribute to the substrate site; that span reads HARE. Asn240 is a glycosylation site (N-linked (GlcNAc...) asparagine). Disulfide bonds link Cys249–Cys273 and Cys264–Cys278. Position 255–256 (255–256) interacts with substrate; sequence NR. His309 provides a ligand contact to Zn(2+). Residue 310 to 311 participates in substrate binding; sequence SY. Asn322 carries an N-linked (GlcNAc...) asparagine glycan. Tyr362 contacts substrate. Glu384 serves as the catalytic Proton donor/acceptor.

The protein belongs to the peptidase M14 family. The cofactor is Zn(2+). As to expression, plasma; synthesized in the liver.

The protein localises to the secreted. It catalyses the reaction Release of C-terminal Arg and Lys from a polypeptide.. TAFI/CPB2 is unique among carboxypeptidases in that it spontaneously inactivates with a short half-life, a property that is crucial for its role in controlling blood clot lysis. The zymogen is stabilized by interactions with the activation peptide. Release of the activation peptide increases a dynamic flap mobility and in time this leads to conformational changes that disrupt the catalytic site and expose a cryptic thrombin-cleavage site present at Arg-323. In terms of biological role, cleaves C-terminal arginine or lysine residues from biologically active peptides such as kinins or anaphylatoxins in the circulation thereby regulating their activities. Down-regulates fibrinolysis by removing C-terminal lysine residues from fibrin that has already been partially degraded by plasmin. This chain is Carboxypeptidase B2 (Cpb2), found in Mus musculus (Mouse).